Consider the following 691-residue polypeptide: MDKVLNREESMELMDLLGLERAAWGNLPLMRKAYLKKCKEFHPDKGGDEDKMKRMNTLYKKMEQDVKVAHQPDFGTWNSSEVPTYGTEEWESWWSSFNEKWDEDLFCHEDMFASDEEATADSQHSTPPKKKRKVEDPKDFPSDLHQFLSQAVFSNRTLACFAVYTTKEKAQILYKKLMEKYSVTFISRHMCAGHNIIFFLTPHRHRVSAINNFCQKLCTFSFLICKGVNKEYLLYSALTRDPYHIIEESIQGGLKEHDFNPEEPEETKQVSWKLITEYAVETKCEDVFLLLGMYLEFQYNVEECKKCQKKDQPYHFKYHEKHFANAIIFAESKNQKSICQQAVDTVLAKKRVDTLHMTREEMLTERFNHILDKMDLIFGAHGNAVLEQYMAGVAWLHCLLPKMDSVIFDFLHCVVFNVPKRRYWLFKGPIDSGKTTLAAGLLDLCGGKALNVNLPMERLTFELGVAIDQYMVVFEDVKGTGAESKDLPSGHGINNLDSLRDYLDGSVKVNLEKKHLNKRTQIFPPGLVTMNEYPVPKTLQARFVRQIDFRPKIYLRKSLQNSEFLLEKRILQSGMTLLLLLIWFRPVADFSKDIQSRIVEWKERLDSEISMYTFSRMKYNICMGKCILDITREEDSETEDSGHGSSTESQSQCSSQVSDTSAPDSENPHSQELHLCKGFQCFKRPKTPPPK.

Residue M1 is modified to N-acetylmethionine; by host. The region spanning 12–75 (ELMDLLGLER…VKVAHQPDFG (64 aa)) is the J domain. Positions 105-109 (LFCHE) match the LXCXE motif motif. Residues S114, S122, and S125 each carry the phosphoserine; by host modification. The tract at residues 117 to 138 (EATADSQHSTPPKKKRKVEDPK) is disordered. At T126 the chain carries Phosphothreonine; by host. The Nuclear localization signal motif lies at 127-134 (PPKKKRKV). A DNA-binding region (T-ag OBD) is located at residues 141 to 256 (PSDLHQFLSQ…EESIQGGLKE (116 aa)). The T-ag D1-type zinc finger occupies 267-359 (TKQVSWKLIT…KRVDTLHMTR (93 aa)). Zn(2+) contacts are provided by C304, C307, H315, and H319. The SF3 helicase domain occupies 402-562 (KMDSVIFDFL…IYLRKSLQNS (161 aa)). An ATP-binding site is contributed by 428 to 435 (GPIDSGKT). The segment at 634–670 (EDSETEDSGHGSSTESQSQCSSQVSDTSAPDSENPHS) is disordered. The segment covering 645-661 (SSTESQSQCSSQVSDTS) has biased composition (low complexity). Residue S661 is modified to Phosphoserine; by host. K683 carries the N6-acetyllysine; by host modification. Residue T687 is modified to Phosphothreonine; by host.

In terms of assembly, forms homohexamers in the presence of ATP. Interacts with host HDAC1. Interacts (via LXCXE domain) with host RB1; the interaction induces the aberrant dissociation of RB1-E2F1 complex thereby disrupting RB1's activity. Interacts (via LXCXE domain) with host pRB-related proteins RBL1 and RBL2. Interacts (via C-terminus) with host TOP1 and POLA1 allowing DNA replication. Interacts with host TP53, inhibiting TP53 binding to DNA. Interacts with host preinitiation complex components TBP, TFIIA and TFIID to regulate transcription initiation. The cofactor is Mg(2+). In terms of processing, phosphorylated on both serine and threonine residues. Small t antigen inhibits the dephosphorylation by the AC form of PP2A. O-Glycosylated near the C-terminal region. Post-translationally, acetylated by CBP in a TP53-dependent manner.

It is found in the host nucleus. It carries out the reaction Couples ATP hydrolysis with the unwinding of duplex DNA by translocating in the 3'-5' direction.. It catalyses the reaction ATP + H2O = ADP + phosphate + H(+). Its function is as follows. Isoform large T antigen is a key early protein essential for both driving viral replication and inducing cellular transformation. Plays a role in viral genome replication by driving entry of quiescent cells into the cell cycle and by autoregulating the synthesis of viral early mRNA. Displays highly oncogenic activities by corrupting the host cellular checkpoint mechanisms that guard cell division and the transcription, replication, and repair of DNA. Participates in the modulation of cellular gene expression preceeding viral DNA replication. This step involves binding to host key cell cycle regulators retinoblastoma protein RB1/pRb and TP53. Induces the disassembly of host E2F1 transcription factors from RB1, thus promoting transcriptional activation of E2F1-regulated S-phase genes. Inhibits host TP53 binding to DNA, abrogating the ability of TP53 to stimulate gene expression. Plays the role of a TFIID-associated factor (TAF) in transcription initiation for all three RNA polymerases, by stabilizing the TBP-TFIIA complex on promoters. Initiates viral DNA replication and unwinding via interactions with the viral origin of replication. Binds two adjacent sites in the SV40 origin. The replication fork movement is facilitated by Large T antigen helicase activity. Has processive 3'-5' DNA helicase activity which requires a short 3' single-stranded region and ATP. Activates the transcription of viral late mRNA, through host TBP and TFIIA stabilization. Interferes with histone deacetylation mediated by HDAC1, leading to activation of transcription. The polypeptide is Large T antigen (BK polyomavirus (strain AS) (BKPyV)).